The chain runs to 326 residues: MMGALCALAVTQAGLILAAPALRAYWPFSWYYHVVFRTVLQDTQRHRWKYWATPAFYAGVYAYCVWLFYGEVYAEIAKALWVPERWVLPAAVVAPAAAGVAAAATPAAVPADAAYDGLLFHDGVECRTCRVRKPARSRHCGVCGRCVPLADHHCVWLNNCVGRGNYGLFYLALGAHCALLTYGAVRLPLAAPAGRWPRALLALELLVASFAVLCVWFTATQVALVRDGMTTNEQDKWYAVQESMREGTLVRLRGRFYHRVEGGDGVEFYSTNAYDHRTYALHNEPYAVVTSHEEIPNVYDTGSFCENLRQRLDPQARIFRRRVRGL.

A topological domain (lumenal) is located at residue M1. A helical transmembrane segment spans residues 2–22 (MGALCALAVTQAGLILAAPAL). Residues 23-49 (RAYWPFSWYYHVVFRTVLQDTQRHRWK) are Cytoplasmic-facing. A helical transmembrane segment spans residues 50 to 70 (YWATPAFYAGVYAYCVWLFYG). Over 71 to 85 (EVYAEIAKALWVPER) the chain is Lumenal. A helical transmembrane segment spans residues 86-106 (WVLPAAVVAPAAAGVAAAATP). At 107–164 (AAVPADAAYDGLLFHDGVECRTCRVRKPARSRHCGVCGRCVPLADHHCVWLNNCVGRG) the chain is on the cytoplasmic side. The DHHC domain occupies 124-174 (VECRTCRVRKPARSRHCGVCGRCVPLADHHCVWLNNCVGRGNYGLFYLALG). The chain crosses the membrane as a helical span at residues 165–185 (NYGLFYLALGAHCALLTYGAV). Residues 186–198 (RLPLAAPAGRWPR) lie on the Lumenal side of the membrane. The helical transmembrane segment at 199–219 (ALLALELLVASFAVLCVWFTA) threads the bilayer. The Cytoplasmic portion of the chain corresponds to 220 to 326 (TQVALVRDGM…RIFRRRVRGL (107 aa)).

This sequence belongs to the DHHC palmitoyltransferase family. SWF1 subfamily.

The protein localises to the endoplasmic reticulum membrane. The enzyme catalyses L-cysteinyl-[protein] + hexadecanoyl-CoA = S-hexadecanoyl-L-cysteinyl-[protein] + CoA. In terms of biological role, palmitoyltransferase that targets several endosomal SNAREs. Palmitoylates the SNAREs at cysteine residues close to the cytoplasmic end of their transmembrane domain. May have a role in the cellular quality control of transmembrane domain-containing proteins. The sequence is that of Palmitoyltransferase SWF1 (SWF1) from Eremothecium gossypii (strain ATCC 10895 / CBS 109.51 / FGSC 9923 / NRRL Y-1056) (Yeast).